The sequence spans 669 residues: Small ribosomal subunit protein mS39 (669 aa).

The transit peptide at 1 to 13 (MAAPCVRLGSVRC) directs the protein to the mitochondrion. PPR repeat units follow at residues 129–163 (IEGVSEEALKERIQLRRIKESIDLFDQLLQGGTAP), 164–199 (SLETTNRLLDLICFYGDREPTRDIQTSEQNQQDDQD), 209–239 (RPGQYRKASEILGSWRENNNAERIFNLMPER), 240–274 (NAHSFCTLIQGMVKYGSSNKAFNTYTDLMNNRLTA), 275–314 (DVQTFNALILAAPDMKEKYNEKWDLIVELLKHMVQQNVRP), 315–351 (NLLTFNSVLKSLRKCGTMARGLALQTINEMKALNIEP), 352–392 (SLGT…FTLR), 396–430 (DVYFFTNAMRVCLDLKDIELAYRLHALQQTADNRG), 438–472 (QSTYYGRFFNLLCMMENIDVILKWYRELIPSLYYP), 473–507 (NSRGMLDLLQALDMDNCLDLIPQIWKDIKQIGHSN), and 556–590 (SSASLGNISVLLARAGRTEEAWKMLQRFKTNHRVP). The disordered stretch occupies residues 186–218 (DIQTSEQNQQDDQDQQETEDSKKRPGQYRKASE). The span at 194–203 (QQDDQDQQET) shows a compositional bias: acidic residues. The tract at residues 648–669 (EDLQKSHSSSSSSSESSDSDRE) is disordered. Residues 653 to 663 (SHSSSSSSSES) show a composition bias toward low complexity.

It belongs to the mitochondrion-specific ribosomal protein mS39 family.

The protein localises to the mitochondrion. Its function is as follows. Mitochondrial protein that may have a role in mitochondrial translation. This Xenopus laevis (African clawed frog) protein is Small ribosomal subunit protein mS39 (ptcd3).